Consider the following 210-residue polypeptide: Thymidylate kinase (210 aa).

10–17 (GLEGAGKS) serves as a coordination point for ATP.

It belongs to the thymidylate kinase family.

It catalyses the reaction dTMP + ATP = dTDP + ADP. Its function is as follows. Phosphorylation of dTMP to form dTDP in both de novo and salvage pathways of dTTP synthesis. This chain is Thymidylate kinase, found in Haemophilus influenzae (strain PittGG).